The following is a 1008-amino-acid chain: SKI family transcriptional corepressor 2 (1008 aa).

Disordered stretches follow at residues 280 to 315 (HLLGAPPPPPPPPPLAELAGAPHAHHKRPRFDDDDD) and 514 to 927 (EPGG…KKDV). Composition is skewed to pro residues over residues 284–294 (APPPPPPPPPL) and 525–534 (APPPGQPPPV). Low complexity-rich tracts occupy residues 535–544 (VANGPGSGPP) and 578–595 (GVTSGTGSASSGAGSVGT). The span at 626-635 (GGKDDAESLA) shows a compositional bias: basic and acidic residues. Over residues 649–666 (PAHHHHHHHHPHHHHHHP) the composition is skewed to basic residues. A compositionally biased stretch (pro residues) spans 691–703 (APPPPPPPPPLAP). Acidic residues-rich tracts occupy residues 724-739 (DSSEDEEDEEEEQEVD) and 748-766 (GEEEEDGRDPEDEEEEDEE). The span at 787 to 797 (LSEKGSGRDRT) shows a compositional bias: basic and acidic residues. The segment covering 842–855 (SSSGGSRPGSPVHH) has biased composition (low complexity). Basic and acidic residues-rich tracts occupy residues 856–872 (PSLEEEPSYKDNQKPKE), 880–890 (TKDDNFSDKNK), and 905–915 (FWRERSGEHTQ).

It belongs to the SKI family. In terms of assembly, interacts with SMAD2 and SMAD3. As to expression, expression is restricted to adult and embryonic central nervous system. Expressed at high levels in the developing cerebellum, ventral metencephalon and myelencephalon at 12.5 dpc (at protein level). In the adult cerebellum, expressed specifically in Purkinje cells.

It localises to the nucleus. The protein resides in the cytoplasm. Its function is as follows. Acts as a TGF-beta antagonist in the nervous system. Exhibits transcriptional repressor activity. The protein is SKI family transcriptional corepressor 2 of Mus musculus (Mouse).